A 324-amino-acid chain; its full sequence is Probable UDP-sugar transporter protein SLC35A4 (324 aa).

The Cytoplasmic portion of the chain corresponds to 1 to 18; that stretch reads MSVEDGGMPGLARPKQAR. Residues 19 to 39 form a helical membrane-spanning segment; sequence WTLMLFLSTAMYGAHAPFLAL. Residues 40–52 lie on the Lumenal side of the membrane; it reads CHVDGRVPFRPSS. Residues 53–73 form a helical membrane-spanning segment; the sequence is AVLLTELTKLLLCAFSLLVGW. At 74-85 the chain is on the cytoplasmic side; the sequence is QTWPQGTPPWRQ. Residues 86–106 form a helical membrane-spanning segment; sequence AAPFALSALLYGANNNLVIYL. Residues 107–142 are Lumenal-facing; it reads QRYMDPSTYQVLSNLKIGSTALLYCLCLGHRLSARQ. A helical transmembrane segment spans residues 143–163; sequence GLALLLLMAAGACYASGGFQE. Residues 164–180 lie on the Cytoplasmic side of the membrane; that stretch reads PGNTLPGPRSAAGARPM. Residues 181 to 201 form a helical membrane-spanning segment; the sequence is PLHITPLGLLLLILYCLISGL. Residues 202-214 are Lumenal-facing; it reads SSVYTELIMKRQR. Residues 215-235 form a helical membrane-spanning segment; the sequence is LPLALQNLFLYTFGVILNLGL. The Cytoplasmic portion of the chain corresponds to 236–248; it reads YAGSGPGPGFLEG. The helical transmembrane segment at 249 to 271 threads the bilayer; that stretch reads FSGWAVLVVLNQAVNGLLMSAVM. The Lumenal segment spans residues 272–279; the sequence is KHGSSITR. A helical transmembrane segment spans residues 280–300; it reads LFIVSCSLVVNAVLSAVLLQL. The Cytoplasmic portion of the chain corresponds to 301-324; sequence QLTATFFLAALLIGLAVCLYYGSP.

This sequence belongs to the nucleotide-sugar transporter family. SLC35A subfamily. In terms of assembly, found in a complex with SLC35A2 and SLC35A3. As to expression, expressed in the kidney, lung, testis, and prostate. Expressed in the brain by sets of neurons, such as the pyramidal cells of the cortex, the Purkinje cells of the cerebellum, and the motoneurons of the brainstem.

Its subcellular location is the golgi apparatus membrane. It catalyses the reaction CDP-L-ribitol(in) + CDP(out) = CDP-L-ribitol(out) + CDP(in). In terms of biological role, mediates the transport of CDP-ribitol. Does not exhibit CMP-sialic acid, UDP-galactose and UDP-N-acetylglucosamine transport activity. This chain is Probable UDP-sugar transporter protein SLC35A4, found in Rattus norvegicus (Rat).